The following is a 200-amino-acid chain: Holliday junction resolvase RecU (200 aa).

Residues 1-24 (MTIRYPNGKRYDQASQPHKTPIKK) form a disordered region. Mg(2+) is bound by residues threonine 85, aspartate 87, glutamate 100, and glutamine 119.

The protein belongs to the RecU family. It depends on Mg(2+) as a cofactor.

The protein resides in the cytoplasm. It carries out the reaction Endonucleolytic cleavage at a junction such as a reciprocal single-stranded crossover between two homologous DNA duplexes (Holliday junction).. Its function is as follows. Endonuclease that resolves Holliday junction intermediates in genetic recombination. Cleaves mobile four-strand junctions by introducing symmetrical nicks in paired strands. Promotes annealing of linear ssDNA with homologous dsDNA. Required for DNA repair, homologous recombination and chromosome segregation. This is Holliday junction resolvase RecU from Bacillus mycoides (strain KBAB4) (Bacillus weihenstephanensis).